Reading from the N-terminus, the 162-residue chain is Caveolin-2 (162 aa).

Residues 1–86 are Cytoplasmic-facing; it reads MGLETEKADV…FEISKYVIYK (86 aa). Tyrosine 19 is subject to Phosphotyrosine; by SRC. Phosphoserine is present on residues serine 20 and serine 23. Position 27 is a phosphotyrosine; by SRC (tyrosine 27). Serine 36 is subject to Phosphoserine. An intramembrane region (helical) is located at residues 87–107; that stretch reads FLTVFLAIPLAFIAGILFATL. The Cytoplasmic segment spans residues 108-162; that stretch reads SCLHIWILMPFVKTCLMVLPSVQTIWKSVTDVVIGPLCTSVGRIFSSVSMQLSHD.

This sequence belongs to the caveolin family. In terms of assembly, monomer or homodimer. Interacts with CAV1; the interaction forms a stable heterooligomeric complex that is required for targeting to lipid rafts and for caveolae formation. Tyrosine phosphorylated forms do not form heterooligomers with the Tyr-19-phosphorylated form existing as a monomer or dimer and the Tyr-27-form as a monomer only. Interacts (tyrosine phosphorylated form) with the SH2 domain-containing proteins, RASA1, NCK1 and SRC. Interacts (tyrosine phosphorylated form) with INSR; the interaction (Tyr-27-phosphorylated form) is increased on insulin stimulation. Interacts (Tyr-19-phosphorylated form) with MAPK1 (phosphorylated form); the interaction, promoted by insulin, leads to nuclear location and MAPK1 activation. Interacts with STAT3; the interaction is increased on insulin-induced tyrosine phosphorylation leading to STAT activation. Phosphorylated on serine and tyrosine residues. CAV1 promotes phosphorylation on Ser-23 which targets the complex to the plasma membrane, lipid rafts and caveolae. Phosphorylation on Ser-36 appears to modulate mitosis in endothelial cells. Phosphorylation on both Tyr-19 and Tyr-27 is required for insulin-induced 'Ser-727' phosphorylation of STAT3 and its activation. Phosphorylation on Tyr-19 is required for insulin-induced phosphorylation of MAPK1 and DNA binding of STAT3. Tyrosine phosphorylation is induced by both EGF and insulin. In terms of tissue distribution, in the retina, mainly expressed in vessels, but also diffuse expression in the inner and outer plexiform layers and in the inner nuclear layer.

Its subcellular location is the nucleus. The protein resides in the cytoplasm. It is found in the golgi apparatus membrane. It localises to the cell membrane. The protein localises to the membrane. Its subcellular location is the caveola. Functionally, may act as a scaffolding protein within caveolar membranes. Interacts directly with G-protein alpha subunits and can functionally regulate their activity. Acts as an accessory protein in conjunction with CAV1 in targeting to lipid rafts and driving caveolae formation. The Ser-36 phosphorylated form has a role in modulating mitosis in endothelial cells. Positive regulator of cellular mitogenesis of the MAPK signaling pathway. Required for the insulin-stimulated nuclear translocation and activation of MAPK1 and STAT3, and the subsequent regulation of cell cycle progression. The chain is Caveolin-2 (Cav2) from Rattus norvegicus (Rat).